The primary structure comprises 175 residues: MSAGALNSAGAVMHSTRLRTNEVAVALPEEGDASLFFVGKIRTPWKSRSDTPRQGSELGPLCTLEISEPWAVALKGVEAYSRLEILYWLHESPRDIVLLSPADDGEIHGAFSLRAPVRPNPIGTSIVKVERVSGNSIVVRGLDCLDGTPLLDIKPDRSLSKPLAPVRKSFSIPAA.

Positions 35-165 (LFFVGKIRTP…DRSLSKPLAP (131 aa)) constitute a TsaA-like domain. Residues 52 to 54 (PRQ), 90 to 91 (HE), Arg114, Thr124, and 145 to 148 (LDGT) contribute to the S-adenosyl-L-methionine site.

It belongs to the tRNA methyltransferase O family.

The sequence is that of Probable S-adenosyl-L-methionine-binding protein VirR (virR) from Rhizobium radiobacter (Agrobacterium tumefaciens).